The chain runs to 773 residues: Phenylalanine--tRNA ligase beta subunit (773 aa).

Residues 39 to 150 (LKAPDKVVVG…GKLELGRPLN (112 aa)) form the tRNA-binding domain. The region spanning 391–467 (KELPIIPISI…RIIGIDNIAS (77 aa)) is the B5 domain. 4 residues coordinate Mg(2+): aspartate 445, aspartate 451, glutamate 454, and glutamate 455. An FDX-ACB domain is found at 682–773 (SKFPAITRDL…TLKNLGLDLR (92 aa)).

The protein belongs to the phenylalanyl-tRNA synthetase beta subunit family. Type 1 subfamily. Tetramer of two alpha and two beta subunits. The cofactor is Mg(2+).

It is found in the cytoplasm. The enzyme catalyses tRNA(Phe) + L-phenylalanine + ATP = L-phenylalanyl-tRNA(Phe) + AMP + diphosphate + H(+). This chain is Phenylalanine--tRNA ligase beta subunit (pheT), found in Campylobacter jejuni subsp. jejuni serotype O:2 (strain ATCC 700819 / NCTC 11168).